A 317-amino-acid chain; its full sequence is tRNA dimethylallyltransferase (317 aa).

14 to 21 (GPTAVGKT) provides a ligand contact to ATP. Substrate is bound at residue 16 to 21 (TAVGKT). Residues 39–42 (DSMQ) form an interaction with substrate tRNA region.

The protein belongs to the IPP transferase family. As to quaternary structure, monomer. Mg(2+) is required as a cofactor.

The catalysed reaction is adenosine(37) in tRNA + dimethylallyl diphosphate = N(6)-dimethylallyladenosine(37) in tRNA + diphosphate. In terms of biological role, catalyzes the transfer of a dimethylallyl group onto the adenine at position 37 in tRNAs that read codons beginning with uridine, leading to the formation of N6-(dimethylallyl)adenosine (i(6)A). In Bacillus cereus (strain ATCC 10987 / NRS 248), this protein is tRNA dimethylallyltransferase.